The following is a 120-amino-acid chain: Piercer of microtubule wall 2 protein (120 aa).

Basic and acidic residues predominate over residues methionine 1–serine 10. Residues methionine 1–proline 25 form a disordered region.

It belongs to the PIERCE2 family. Microtubule inner protein component of sperm flagellar doublet microtubules. Interacts with CFAP53, ODAD1 and ODAD3; the interactions link the outer dynein arms docking complex (ODA-DC) to the internal microtubule inner proteins (MIP) in cilium axoneme. As to expression, expressed in trachea multiciliated cells.

Its subcellular location is the cytoplasm. The protein localises to the cytoskeleton. The protein resides in the cilium axoneme. It is found in the flagellum axoneme. Microtubule inner protein involved in the attachment of outer dynein arms (ODAs) to dynein-decorated doublet microtubules (DMTs) in cilia axoneme, which is required for motile cilia beating. The protein is Piercer of microtubule wall 2 protein (PIERCE2) of Bos taurus (Bovine).